Reading from the N-terminus, the 450-residue chain is Probable transporter MCH1 (450 aa).

12 consecutive transmembrane segments (helical) span residues 32–52 (AFLVALCACIPAGFISQISLY), 69–89 (VLFSAVNLGGYITPPLLGLLS), 96–116 (MLSWLSFVGFVPTYAYAAWVF), 127–147 (VLCFTLIGISTNALYFSALFT), 157–177 (LCSISLPATFYGMASVLGSQL), 199–219 (LAVAYTLISFCMWFATSIVTM), 255–275 (PAAYFMALVLLLSLGPMEMFL), 290–309 (VLPEFAIASTCSRFLSGLII), 320–340 (MSVQWAVLLLGVVGQWIVVLA), 355–375 (LSGACYGGLFTVSPILTLAVW), 378–398 (AVFGTAYGSFMITPAVGSILF), and 423–443 (VFWSSTSALAIALLFSVLMYL).

Belongs to the major facilitator superfamily.

The protein resides in the vacuole membrane. Probable transporter. The sequence is that of Probable transporter MCH1 (MCH1) from Eremothecium gossypii (strain ATCC 10895 / CBS 109.51 / FGSC 9923 / NRRL Y-1056) (Yeast).